Reading from the N-terminus, the 464-residue chain is Centrosomal protein of 55 kDa (464 aa).

Residues 1 to 11 are compositionally biased toward basic and acidic residues; sequence MSSRSTKDLIK. Residues 1-26 are disordered; it reads MSSRSTKDLIKSKWGSKPSNSKSETT. 3 coiled-coil regions span residues 22–186, 238–337, and 374–403; these read KSET…QWLV, NDLL…FLYT, and QHQL…LHEF. Ser96 carries the post-translational modification Phosphoserine. The tract at residues 157-236 is interaction with TSG101; the sequence is PNCFNSSINN…GYLQEEKQKC (80 aa). Residues 160–214 are interaction with PDCD6IP; it reads FNSSINNIHEMEIQLKDALEKNQQWLVYDQQREVYVKGLLAKIFELEKKTETAAH. The tract at residues 355 to 464 is required for localization to the interphase centrosome and to the midbody during cytokinesis; that stretch reads QMQACTLDFE…LLVHVEYCSK (110 aa). Residues Ser425 and Ser428 each carry the phosphoserine; by CDK1 and MAPK1 modification. Thr430 bears the Phosphothreonine mark. Ser436 carries the phosphoserine; by PLK1 modification.

In terms of assembly, homodimer. Interacts (phosphorylated on Ser-425 and Ser-428) with PLK1; the interaction is indirect via the MTMR3:MTMR4 heterooligomer, occurs during early mitosis, regulates the phosphorylation of CEP55 by PLK1 and its recruitment to the midbody where it can mediate cell abscission. Interacts with AKAP9/CG-NAP; the interaction occurs in interphase and is lost upon mitotic entry. Interacts with PCNT/Kendrin; the interaction occurs in interphase and is lost upon mitotic entry. Directly interacts with PDCD6IP; this interaction is required for PDCD6IP targeting to the midbody; CEP55 binds PDCD6IP in a 2:1 stoichiometry; PDCD6IP competes with TSG101 for the same binding site. Interacts with TSG101; TSG101 competes with PDCD6IP for the same binding site; interaction is required for cytokinesis but not for viral budding. Interacts with MVB12A, VPS37B, VPS37C and VPS28. In terms of processing, there is a hierachy of phosphorylation, where both Ser-425 and Ser-428 are phosphorylated at the onset of mitosis, prior to Ser-436. Phosphorylation at Ser-425 and Ser-428 is required for dissociation from the centrosome at the G2/M boundary. Phosphorylation at the 3 sites, Ser-425, Ser-428 and Ser-436, is required for protein function at the final stages of cell division to complete cytokinesis successfully. Expressed in embryonic brain. Expressed in fetal brain ganglionic eminence, kidney tubules and multinucleate neurons in the temporal cortex. Expressed in adult brain, cerebellum, kidney tubules, intestine and muscles (at protein level). Widely expressed, mostly in proliferative tissues. Highly expressed in testis. Intermediate levels in adult and fetal thymus, as well as in various cancer cell lines. Low levels in different parts of the digestive tract, bone marrow, lymph nodes, placenta, fetal heart and fetal spleen. Hardly detected in brain.

It localises to the cytoplasm. Its subcellular location is the cytoskeleton. The protein localises to the microtubule organizing center. It is found in the centrosome. The protein resides in the centriole. It localises to the cleavage furrow. Its subcellular location is the midbody. The protein localises to the midbody ring. Plays a role in mitotic exit and cytokinesis. Recruits PDCD6IP and TSG101 to midbody during cytokinesis. Required for successful completion of cytokinesis. Not required for microtubule nucleation. Plays a role in the development of the brain and kidney. The chain is Centrosomal protein of 55 kDa from Homo sapiens (Human).